The primary structure comprises 136 residues: ATP synthase epsilon chain (136 aa).

The tract at residues 106–136 (MEGQPSSPEKLKAQQQLNEARARLQASKTAD) is disordered.

This sequence belongs to the ATPase epsilon chain family. In terms of assembly, F-type ATPases have 2 components, CF(1) - the catalytic core - and CF(0) - the membrane proton channel. CF(1) has five subunits: alpha(3), beta(3), gamma(1), delta(1), epsilon(1). CF(0) has three main subunits: a, b and c.

The protein resides in the cellular thylakoid membrane. Its function is as follows. Produces ATP from ADP in the presence of a proton gradient across the membrane. The polypeptide is ATP synthase epsilon chain (Synechococcus sp. (strain CC9605)).